The chain runs to 477 residues: ATP synthase subunit beta (477 aa).

148 to 155 (GGAGVGKT) contacts ATP.

It belongs to the ATPase alpha/beta chains family. In terms of assembly, F-type ATPases have 2 components, CF(1) - the catalytic core - and CF(0) - the membrane proton channel. CF(1) has five subunits: alpha(3), beta(3), gamma(1), delta(1), epsilon(1). CF(0) has three main subunits: a(1), b(2) and c(9-12). The alpha and beta chains form an alternating ring which encloses part of the gamma chain. CF(1) is attached to CF(0) by a central stalk formed by the gamma and epsilon chains, while a peripheral stalk is formed by the delta and b chains.

The protein resides in the cell inner membrane. The enzyme catalyses ATP + H2O + 4 H(+)(in) = ADP + phosphate + 5 H(+)(out). In terms of biological role, produces ATP from ADP in the presence of a proton gradient across the membrane. The catalytic sites are hosted primarily by the beta subunits. The protein is ATP synthase subunit beta of Psychrobacter cryohalolentis (strain ATCC BAA-1226 / DSM 17306 / VKM B-2378 / K5).